The sequence spans 908 residues: Glutamate receptor ionotropic, kainate 2 (908 aa).

The first 31 residues, 1–31 (MKIISPVLSNLVFSRSIKVLLCLLWIGYSQG), serve as a signal peptide directing secretion. The Extracellular portion of the chain corresponds to 32–561 (TTHVLRFGGI…VFSFLNPLSP (530 aa)). N-linked (GlcNAc...) asparagine glycans are attached at residues N67, N73, N275, N378, N412, N423, and N430. C96 and C347 are oxidised to a cystine. 3 residues coordinate L-glutamate: P516, A518, and R523. N546 carries an N-linked (GlcNAc...) asparagine glycan. Residues 562 to 582 (DIWMYILLAYLGVSCVLFVIA) form a helical membrane-spanning segment. The Cytoplasmic portion of the chain corresponds to 583-638 (RFSPYEWYNPHPCNPDSDVVENNFTLLNSFWFGVGALMQQGSELMPKALSTRIVGG). Residues 639–659 (IWWFFTLIIISSYTANLAAFL) traverse the membrane as a helical segment. Residues 660–819 (TVERMESPID…KEASALGVQN (160 aa)) lie on the Extracellular side of the membrane. A689, T690, and E738 together coordinate L-glutamate. C750 and C804 are joined by a disulfide. N-linked (GlcNAc...) asparagine glycosylation occurs at N751. A helical transmembrane segment spans residues 820–840 (IGGIFIVLAAGLVLSVFVAVG). Topologically, residues 841-908 (EFLYKSKKNA…RRLPGKETMA (68 aa)) are cytoplasmic. 2 positions are modified to phosphoserine; by PKC: S846 and S868. K886 is covalently cross-linked (Glycyl lysine isopeptide (Lys-Gly) (interchain with G-Cter in SUMO1)).

The protein belongs to the glutamate-gated ion channel (TC 1.A.10.1) family. GRIK2 subfamily. In terms of assembly, homotetramer and heterotetramer with GRIK5. Tetramers may be formed by the dimerization of dimers. Assembles into a kainate-gated homomeric channel that does not bind AMPA. Can form functional heteromeric receptors with GRIK4 and GRIK5. Can form functional heteromeric receptors with GRIK3. Interacts with DLG4. Interacts with NETO2. Interacts (via C-terminus) with KLHL17 (via kelch repeats); the interaction targets GRIK2 for degradation via ubiquitin-proteasome pathway. In terms of processing, sumoylation mediates kainate receptor-mediated endocytosis and regulates synaptic transmission. Sumoylation is enhanced by PIAS3 and desumoylated by SENP1. Post-translationally, ubiquitinated. Ubiquitination regulates the GRIK2 levels at the synapse by leading kainate receptor degradation through proteasome. Phosphorylated by PKC at Ser-868 upon agonist activation, this directly enhance sumoylation. As to expression, highest expression is found in the olfactory lobe, piriform cortex, dentate gyrus, hippocampus, granular cell layer of the cerebellum, and in caudate-putamen.

It is found in the cell membrane. The protein resides in the postsynaptic cell membrane. The enzyme catalyses Ca(2+)(in) = Ca(2+)(out). The catalysed reaction is Na(+)(in) = Na(+)(out). Its activity is regulated as follows. Cold receptor activity activated by temperatures between 10-19 degrees Celsius. Its function is as follows. Ionotropic glutamate receptor that functions as a cation-permeable ligand-gated ion channel, gated by L-glutamate and the glutamatergic agonist kainic acid. L-glutamate acts as an excitatory neurotransmitter at many synapses in the central nervous system. Binding of the excitatory neurotransmitter L-glutamate induces a conformation change, leading to the opening of the cation channel, and thereby converts the chemical signal to an electrical impulse. The receptor then desensitizes rapidly and enters a transient inactive state, characterized by the presence of bound agonist. Modulates cell surface expression of NETO2. In association with GRIK3, involved in presynaptic facilitation of glutamate release at hippocampal mossy fiber synapses. Independent of its ionotropic glutamate receptor activity, acts as a thermoreceptor conferring sensitivity to cold temperatures. Functions in dorsal root ganglion neurons. This chain is Glutamate receptor ionotropic, kainate 2 (Grik2), found in Rattus norvegicus (Rat).